The primary structure comprises 506 residues: MKILASSTNYVLHNRLSNSQYEDARSKIVNFGGEFTNDAAKADYIFVNYSQINRVRRELRTIGTPLETCVSCKLIVKIDWLNEPKESLTPGNPYVIWHRKPEMKVGSPYTPSTRPASHTEAPNDFENHETPNTENNNEVKSIDNVDQEGSVYPTTKEYPYVLEIPRYACQRKTPLKCVNQAFVNALSVLKTCREVNGESVRTRAYGMAIATIKAFPLPIDSAEQLEKMPGCGPKIVHLWKEFASTGTLKEAEEFQKDPASKILLLFYNIFGVGASHAAEWYQKGWRTIEQVRKHKDSFTKQIKVGLEFYEDFCKTVTIEEATEIYETIVSRMPDGIKIQSCLVGGFRRGKPVGADVDMVLSPSHTHSTKHLVDVLLRILDEEFQFRLISVQEHSCGGKKGYVMLAVILSNSSKINRRVDIIVVPPAYIGSAVLGWSGGIFFLRDLKLYANSHLGLSYDSFEIINLKTGKDICPDEFNEWKDPVEAEKDIFRYFSLEYIEPKFRNTG.

The 98-residue stretch at 1 to 98 (MKILASSTNY…TPGNPYVIWH (98 aa)) folds into the BRCT domain. The segment at 106–150 (GSPYTPSTRPASHTEAPNDFENHETPNTENNNEVKSIDNVDQEGS) is disordered. Positions 348–357 (RGKPVGADVD) are involved in ssDNA binding. Mg(2+) contacts are provided by D355, D357, and D419.

This sequence belongs to the DNA polymerase type-X family. Mg(2+) serves as cofactor.

Its subcellular location is the cytoplasm. The protein resides in the nucleus. It carries out the reaction DNA(n) + a 2'-deoxyribonucleoside 5'-triphosphate = DNA(n+1) + diphosphate. Repair polymerase. Involved in gap-filling in DNA non-homologous end joining (NHEJ) required for double-strand break repair. Can incorporate a ribonucleotide (rNTP) into a primer DNA. In Schizosaccharomyces pombe (strain 972 / ATCC 24843) (Fission yeast), this protein is DNA polymerase type-X family protein pol4 (pol4).